Consider the following 80-residue polypeptide: Cytochrome c oxidase subunit 7B, mitochondrial (80 aa).

A mitochondrion-targeting transit peptide spans 1–24; that stretch reads MFPLVKSALNRLQVRSIQQTMARQ. Topologically, residues 25-32 are mitochondrial matrix; it reads SHQKRTPD. A helical membrane pass occupies residues 33–59; it reads FHDKYGNAVLASGATFCIVTWTYVATQ. Over 60-80 the chain is Mitochondrial intermembrane; sequence VGIEWNLSPVGRVTPKEWRNQ.

The protein belongs to the cytochrome c oxidase VIIb family. In terms of assembly, component of the cytochrome c oxidase (complex IV, CIV), a multisubunit enzyme composed of 14 subunits. The complex is composed of a catalytic core of 3 subunits MT-CO1, MT-CO2 and MT-CO3, encoded in the mitochondrial DNA, and 11 supernumerary subunits COX4I1 (or COX4I2), COX5A, COX5B, COX6A1 (or COX6A2), COX6B1 (or COX6B2), COX6C, COX7A2 (or COX7A1), COX7B, COX7C, COX8A and NDUFA4, which are encoded in the nuclear genome. The complex exists as a monomer or a dimer and forms supercomplexes (SCs) in the inner mitochondrial membrane with NADH-ubiquinone oxidoreductase (complex I, CI) and ubiquinol-cytochrome c oxidoreductase (cytochrome b-c1 complex, complex III, CIII), resulting in different assemblies (supercomplex SCI(1)III(2)IV(1) and megacomplex MCI(2)III(2)IV(2)).

The protein localises to the mitochondrion inner membrane. Its pathway is energy metabolism; oxidative phosphorylation. In terms of biological role, component of the cytochrome c oxidase, the last enzyme in the mitochondrial electron transport chain which drives oxidative phosphorylation. The respiratory chain contains 3 multisubunit complexes succinate dehydrogenase (complex II, CII), ubiquinol-cytochrome c oxidoreductase (cytochrome b-c1 complex, complex III, CIII) and cytochrome c oxidase (complex IV, CIV), that cooperate to transfer electrons derived from NADH and succinate to molecular oxygen, creating an electrochemical gradient over the inner membrane that drives transmembrane transport and the ATP synthase. Cytochrome c oxidase is the component of the respiratory chain that catalyzes the reduction of oxygen to water. Electrons originating from reduced cytochrome c in the intermembrane space (IMS) are transferred via the dinuclear copper A center (CU(A)) of subunit 2 and heme A of subunit 1 to the active site in subunit 1, a binuclear center (BNC) formed by heme A3 and copper B (CU(B)). The BNC reduces molecular oxygen to 2 water molecules using 4 electrons from cytochrome c in the IMS and 4 protons from the mitochondrial matrix. Plays a role in proper central nervous system (CNS) development in vertebrates. The polypeptide is Cytochrome c oxidase subunit 7B, mitochondrial (COX7B) (Homo sapiens (Human)).